Here is a 261-residue protein sequence, read N- to C-terminus: MSTDRSIRIGIAGMAGRMGSLLVEEAAAQGTVSGGTLRPGSNSPAPVGIPAFADINTLAEASDAVIDFTSASTVQAHARALSKAGTAWILGTSGLSPADEKAVEEIAALVPVVYAPNFAPGVNLVLALAEKMAAALPGNRYDAEIVEMHHRRKIDSPSGTAIGLGRAVAAGRGVMLEEVIESGRHGHVGPRQPGAIGFAALRGGQVVGEHTLLFAADDEHIALTHRAFDRRAFARGAVQAALWVQGKPPGLYSMMDVLGMR.

NAD(+) contacts are provided by residues 13–18 (GMAGRM), 91–93 (GTS), and 115–118 (APNF). The Proton donor/acceptor role is filled by His-149. His-150 serves as a coordination point for (S)-2,3,4,5-tetrahydrodipicolinate. The active-site Proton donor is Lys-153. 159–160 (GT) contacts (S)-2,3,4,5-tetrahydrodipicolinate.

This sequence belongs to the DapB family.

It localises to the cytoplasm. The enzyme catalyses (S)-2,3,4,5-tetrahydrodipicolinate + NAD(+) + H2O = (2S,4S)-4-hydroxy-2,3,4,5-tetrahydrodipicolinate + NADH + H(+). The catalysed reaction is (S)-2,3,4,5-tetrahydrodipicolinate + NADP(+) + H2O = (2S,4S)-4-hydroxy-2,3,4,5-tetrahydrodipicolinate + NADPH + H(+). It functions in the pathway amino-acid biosynthesis; L-lysine biosynthesis via DAP pathway; (S)-tetrahydrodipicolinate from L-aspartate: step 4/4. In terms of biological role, catalyzes the conversion of 4-hydroxy-tetrahydrodipicolinate (HTPA) to tetrahydrodipicolinate. The chain is 4-hydroxy-tetrahydrodipicolinate reductase from Granulibacter bethesdensis (strain ATCC BAA-1260 / CGDNIH1).